Consider the following 151-residue polypeptide: Deoxyuridine 5'-triphosphate nucleotidohydrolase (151 aa).

Residues 70 to 72 (RSG), N83, 87 to 89 (LID), and M97 contribute to the substrate site.

The protein belongs to the dUTPase family. It depends on Mg(2+) as a cofactor.

The catalysed reaction is dUTP + H2O = dUMP + diphosphate + H(+). It participates in pyrimidine metabolism; dUMP biosynthesis; dUMP from dCTP (dUTP route): step 2/2. Functionally, this enzyme is involved in nucleotide metabolism: it produces dUMP, the immediate precursor of thymidine nucleotides and it decreases the intracellular concentration of dUTP so that uracil cannot be incorporated into DNA. In Pseudomonas fluorescens (strain SBW25), this protein is Deoxyuridine 5'-triphosphate nucleotidohydrolase.